Reading from the N-terminus, the 228-residue chain is Demethylmenaquinone methyltransferase (228 aa).

Residues Thr-62, Asp-80, 100-101, and Ser-117 each bind S-adenosyl-L-methionine; that span reads DA.

This sequence belongs to the class I-like SAM-binding methyltransferase superfamily. MenG/UbiE family.

It carries out the reaction a 2-demethylmenaquinol + S-adenosyl-L-methionine = a menaquinol + S-adenosyl-L-homocysteine + H(+). The protein operates within quinol/quinone metabolism; menaquinone biosynthesis; menaquinol from 1,4-dihydroxy-2-naphthoate: step 2/2. Functionally, methyltransferase required for the conversion of demethylmenaquinol (DMKH2) to menaquinol (MKH2). The chain is Demethylmenaquinone methyltransferase from Mycolicibacterium vanbaalenii (strain DSM 7251 / JCM 13017 / BCRC 16820 / KCTC 9966 / NRRL B-24157 / PYR-1) (Mycobacterium vanbaalenii).